A 282-amino-acid chain; its full sequence is Pantothenate synthetase (282 aa).

28–35 (MGALHSGH) contributes to the ATP binding site. Histidine 35 serves as the catalytic Proton donor. A (R)-pantoate-binding site is contributed by glutamine 59. Residue glutamine 59 coordinates beta-alanine. Residue 146–149 (GEKD) participates in ATP binding. Glutamine 152 contributes to the (R)-pantoate binding site. ATP is bound by residues valine 175 and 183–186 (LSSR).

The protein belongs to the pantothenate synthetase family. In terms of assembly, homodimer.

It is found in the cytoplasm. It catalyses the reaction (R)-pantoate + beta-alanine + ATP = (R)-pantothenate + AMP + diphosphate + H(+). The protein operates within cofactor biosynthesis; (R)-pantothenate biosynthesis; (R)-pantothenate from (R)-pantoate and beta-alanine: step 1/1. Its function is as follows. Catalyzes the condensation of pantoate with beta-alanine in an ATP-dependent reaction via a pantoyl-adenylate intermediate. This is Pantothenate synthetase from Salinispora arenicola (strain CNS-205).